A 428-amino-acid chain; its full sequence is Protein CANDIDATE G-PROTEIN COUPLED RECEPTOR 6 (428 aa).

The signal sequence occupies residues 1 to 22 (MTILPFLAAVFVLQLLSTLTVA). Asn-31, Asn-89, and Asn-157 each carry an N-linked (GlcNAc...) asparagine glycan. 7 consecutive transmembrane segments (helical) span residues 173 to 193 (LYLV…CFCW), 202 to 222 (IHLL…CAAV), 238 to 258 (IVFY…IVLI), 276 to 296 (LLVI…VIGE), 310 to 330 (IFFL…VWSM), 356 to 376 (FYVL…VMKM), and 385 to 405 (VSNA…FYMF).

The protein belongs to the LU7TM family.

Its subcellular location is the membrane. Functionally, G-protein coupled receptor. Plays a role in plants and microbes interactions. This chain is Protein CANDIDATE G-PROTEIN COUPLED RECEPTOR 6, found in Arabidopsis thaliana (Mouse-ear cress).